Consider the following 232-residue polypeptide: tRNA (guanine-N(7)-)-methyltransferase (232 aa).

Positions 63, 88, 115, and 137 each coordinate S-adenosyl-L-methionine. Residue Asp-137 is part of the active site. Residues Lys-141, Asp-173, and 211 to 214 (TRYE) contribute to the substrate site.

The protein belongs to the class I-like SAM-binding methyltransferase superfamily. TrmB family.

It catalyses the reaction guanosine(46) in tRNA + S-adenosyl-L-methionine = N(7)-methylguanosine(46) in tRNA + S-adenosyl-L-homocysteine. It functions in the pathway tRNA modification; N(7)-methylguanine-tRNA biosynthesis. Catalyzes the formation of N(7)-methylguanine at position 46 (m7G46) in tRNA. The chain is tRNA (guanine-N(7)-)-methyltransferase from Rhizobium meliloti (strain 1021) (Ensifer meliloti).